A 319-amino-acid chain; its full sequence is Ficolin-2 (319 aa).

An N-terminal signal peptide occupies residues 1–22 (MVLGSAALFVLSLCVTELTLHA). One can recognise a Collagen-like domain in the interval 45–101 (GCPGLPGALGPKGEAGAKGDRGESGLPGHPGKAGPTGPKGDRGEKGVRGEKGDTGPS). A disordered region spans residues 53–106 (LGPKGEAGAKGDRGESGLPGHPGKAGPTGPKGDRGEKGVRGEKGDTGPSQSCAT). The span at 83 to 97 (KGDRGEKGVRGEKGD) shows a compositional bias: basic and acidic residues. In terms of domain architecture, Fibrinogen C-terminal spans 102-319 (QSCATGPRTC…KVSEMKVRLI (218 aa)). 2 disulfides stabilise this stretch: Cys104–Cys132 and Cys111–Cys139. Residues Asp255, Asp257, and Ser261 each coordinate Ca(2+). Cysteines 263 and 276 form a disulfide. A glycan (N-linked (GlcNAc...) asparagine) is linked at Asn306.

This sequence belongs to the ficolin lectin family. In terms of assembly, homotrimer. Interacts with elastin. Interacts with MASP1 and MASP2.

Its subcellular location is the secreted. May function in innate immunity through activation of the lectin complement pathway. Calcium-dependent and GlcNAc-binding lectin. This Rattus norvegicus (Rat) protein is Ficolin-2 (Fcn2).